A 74-amino-acid polypeptide reads, in one-letter code: Defensin (74 aa).

The signal sequence occupies residues 1–21; that stretch reads MRGIYICLVFVLVCGLVSGLA. A propeptide spanning residues 22–34 is cleaved from the precursor; that stretch reads DVPAESEMAHLRV. Cystine bridges form between Cys40-Cys61, Cys47-Cys69, and Cys51-Cys71.

In terms of tissue distribution, expressed in the hemocytes, fat body and ovaries.

The protein localises to the secreted. Functionally, antibacterial peptide mostly active against Gram-positive bacteria. In Rhipicephalus microplus (Cattle tick), this protein is Defensin.